A 59-amino-acid polypeptide reads, in one-letter code: Large ribosomal subunit protein uL30 (59 aa).

This sequence belongs to the universal ribosomal protein uL30 family. In terms of assembly, part of the 50S ribosomal subunit.

The sequence is that of Large ribosomal subunit protein uL30 from Buchnera aphidicola subsp. Acyrthosiphon pisum (strain 5A).